We begin with the raw amino-acid sequence, 261 residues long: Carnitinyl-CoA dehydratase (261 aa).

Residue Glu-111 is the Nucleophile of the active site. Glu-131 acts as the Proton acceptor in catalysis.

It belongs to the enoyl-CoA hydratase/isomerase family.

The enzyme catalyses (R)-carnitinyl-CoA = crotonobetainyl-CoA + H2O. It participates in amine and polyamine metabolism; carnitine metabolism. Its function is as follows. Catalyzes the reversible dehydration of L-carnitinyl-CoA to crotonobetainyl-CoA. This is Carnitinyl-CoA dehydratase from Escherichia coli (strain SMS-3-5 / SECEC).